The chain runs to 617 residues: ATP-dependent zinc metalloprotease FtsH (617 aa).

The Cytoplasmic portion of the chain corresponds to 1–7 (MKIPFDR). The helical transmembrane segment at 8-28 (WLGWPTLLLLLLGLWLLGSSL) threads the bilayer. Over 29–102 (RDQRTVEAVP…VSYRRVRESN (74 aa)) the chain is Periplasmic. The helical transmembrane segment at 103 to 123 (WLSQLLSWMAGPLLLLGFWYF) threads the bilayer. The Cytoplasmic portion of the chain corresponds to 124–617 (MSRRIDGQQG…GRPAAIRQVA (494 aa)). 198–205 (GPTGTGKT) serves as a coordination point for ATP. His421 contacts Zn(2+). The active site involves Glu422. Residues His425 and Asp498 each coordinate Zn(2+).

In the central section; belongs to the AAA ATPase family. It in the C-terminal section; belongs to the peptidase M41 family. In terms of assembly, homohexamer. The cofactor is Zn(2+).

The protein resides in the cell inner membrane. Acts as a processive, ATP-dependent zinc metallopeptidase for both cytoplasmic and membrane proteins. Plays a role in the quality control of integral membrane proteins. The protein is ATP-dependent zinc metalloprotease FtsH of Methylibium petroleiphilum (strain ATCC BAA-1232 / LMG 22953 / PM1).